The following is a 150-amino-acid chain: Arginine repressor (150 aa).

This sequence belongs to the ArgR family.

The protein localises to the cytoplasm. The protein operates within amino-acid biosynthesis; L-arginine biosynthesis [regulation]. Regulates arginine biosynthesis genes. The sequence is that of Arginine repressor from Staphylococcus saprophyticus subsp. saprophyticus (strain ATCC 15305 / DSM 20229 / NCIMB 8711 / NCTC 7292 / S-41).